Reading from the N-terminus, the 290-residue chain is ATP synthase subunit a (290 aa).

The next 7 helical transmembrane spans lie at 54-74 (AVHL…ILLF), 115-135 (IAPL…LKWI), 136-156 (PVDY…KIVP), 164-184 (FGLS…VKGF), 201-221 (LVPF…LSLA), 233-253 (VVFI…NVPW), and 254-274 (AIFH…LTVV).

Belongs to the ATPase A chain family. As to quaternary structure, F-type ATPases have 2 components, CF(1) - the catalytic core - and CF(0) - the membrane proton channel. CF(1) has five subunits: alpha(3), beta(3), gamma(1), delta(1), epsilon(1). CF(0) has three main subunits: a(1), b(2) and c(9-12). The alpha and beta chains form an alternating ring which encloses part of the gamma chain. CF(1) is attached to CF(0) by a central stalk formed by the gamma and epsilon chains, while a peripheral stalk is formed by the delta and b chains.

It is found in the cell inner membrane. Functionally, key component of the proton channel; it plays a direct role in the translocation of protons across the membrane. This is ATP synthase subunit a from Stutzerimonas stutzeri (strain A1501) (Pseudomonas stutzeri).